Reading from the N-terminus, the 158-residue chain is 6,7-dimethyl-8-ribityllumazine synthase (158 aa).

5-amino-6-(D-ribitylamino)uracil-binding positions include Phe-23, 61–63, and 85–87; these read SFE and AVI. 90-91 contacts (2S)-2-hydroxy-3-oxobutyl phosphate; sequence ET. The active-site Proton donor is His-93. Phe-118 is a binding site for 5-amino-6-(D-ribitylamino)uracil. Arg-132 provides a ligand contact to (2S)-2-hydroxy-3-oxobutyl phosphate.

It belongs to the DMRL synthase family.

The enzyme catalyses (2S)-2-hydroxy-3-oxobutyl phosphate + 5-amino-6-(D-ribitylamino)uracil = 6,7-dimethyl-8-(1-D-ribityl)lumazine + phosphate + 2 H2O + H(+). Its pathway is cofactor biosynthesis; riboflavin biosynthesis; riboflavin from 2-hydroxy-3-oxobutyl phosphate and 5-amino-6-(D-ribitylamino)uracil: step 1/2. Catalyzes the formation of 6,7-dimethyl-8-ribityllumazine by condensation of 5-amino-6-(D-ribitylamino)uracil with 3,4-dihydroxy-2-butanone 4-phosphate. This is the penultimate step in the biosynthesis of riboflavin. This is 6,7-dimethyl-8-ribityllumazine synthase from Prochlorococcus marinus (strain MIT 9215).